The primary structure comprises 72 residues: DNA-directed RNA polymerase subunit omega (72 aa).

This sequence belongs to the RNA polymerase subunit omega family. The RNAP catalytic core consists of 2 alpha, 1 beta, 1 beta' and 1 omega subunit. When a sigma factor is associated with the core the holoenzyme is formed, which can initiate transcription.

It catalyses the reaction RNA(n) + a ribonucleoside 5'-triphosphate = RNA(n+1) + diphosphate. In terms of biological role, promotes RNA polymerase assembly. Latches the N- and C-terminal regions of the beta' subunit thereby facilitating its interaction with the beta and alpha subunits. In Lactobacillus johnsonii (strain CNCM I-12250 / La1 / NCC 533), this protein is DNA-directed RNA polymerase subunit omega.